Reading from the N-terminus, the 266-residue chain is Secreted RxLR effector protein 128 (266 aa).

A signal peptide spans 1 to 18 (MRGAFYTAIALLIGRSQT). Residues 48–63 (RYLRDGLAHSATNEER) carry the RxLR-dEER motif.

Belongs to the RxLR effector family.

Its subcellular location is the secreted. It localises to the host nucleus. Functionally, secreted effector that dos not suppress the host cell death induced by cell death-inducing proteins. The protein is Secreted RxLR effector protein 128 of Plasmopara viticola (Downy mildew of grapevine).